We begin with the raw amino-acid sequence, 388 residues long: Succinate--CoA ligase [ADP-forming] subunit beta (388 aa).

Positions 9–244 (KQLFAEYGLP…PSQDDPREAH (236 aa)) constitute an ATP-grasp domain. ATP is bound by residues lysine 46, 53–55 (GRG), glutamate 99, threonine 102, and glutamate 107. Mg(2+) contacts are provided by asparagine 199 and aspartate 213. Residues asparagine 264 and 321–323 (GIV) each bind substrate.

Belongs to the succinate/malate CoA ligase beta subunit family. As to quaternary structure, heterotetramer of two alpha and two beta subunits. The cofactor is Mg(2+).

The catalysed reaction is succinate + ATP + CoA = succinyl-CoA + ADP + phosphate. It catalyses the reaction GTP + succinate + CoA = succinyl-CoA + GDP + phosphate. Its pathway is carbohydrate metabolism; tricarboxylic acid cycle; succinate from succinyl-CoA (ligase route): step 1/1. Functionally, succinyl-CoA synthetase functions in the citric acid cycle (TCA), coupling the hydrolysis of succinyl-CoA to the synthesis of either ATP or GTP and thus represents the only step of substrate-level phosphorylation in the TCA. The beta subunit provides nucleotide specificity of the enzyme and binds the substrate succinate, while the binding sites for coenzyme A and phosphate are found in the alpha subunit. The chain is Succinate--CoA ligase [ADP-forming] subunit beta from Pseudomonas putida (strain GB-1).